A 179-amino-acid polypeptide reads, in one-letter code: Adenine phosphoribosyltransferase (179 aa).

This sequence belongs to the purine/pyrimidine phosphoribosyltransferase family. Homodimer.

The protein resides in the cytoplasm. The enzyme catalyses AMP + diphosphate = 5-phospho-alpha-D-ribose 1-diphosphate + adenine. The protein operates within purine metabolism; AMP biosynthesis via salvage pathway; AMP from adenine: step 1/1. Functionally, catalyzes a salvage reaction resulting in the formation of AMP, that is energically less costly than de novo synthesis. This chain is Adenine phosphoribosyltransferase, found in Actinobacillus pleuropneumoniae serotype 5b (strain L20).